Consider the following 228-residue polypeptide: Octanoyltransferase (228 aa).

The region spanning glycine 31–phenylalanine 212 is the BPL/LPL catalytic domain. Residues arginine 76–histidine 83, alanine 143–glycine 145, and glycine 156–alanine 158 contribute to the substrate site. Cysteine 174 (acyl-thioester intermediate) is an active-site residue.

This sequence belongs to the LipB family.

The protein resides in the cytoplasm. The enzyme catalyses octanoyl-[ACP] + L-lysyl-[protein] = N(6)-octanoyl-L-lysyl-[protein] + holo-[ACP] + H(+). It functions in the pathway protein modification; protein lipoylation via endogenous pathway; protein N(6)-(lipoyl)lysine from octanoyl-[acyl-carrier-protein]: step 1/2. Functionally, catalyzes the transfer of endogenously produced octanoic acid from octanoyl-acyl-carrier-protein onto the lipoyl domains of lipoate-dependent enzymes. Lipoyl-ACP can also act as a substrate although octanoyl-ACP is likely to be the physiological substrate. The sequence is that of Octanoyltransferase from Thermoanaerobacter sp. (strain X514).